The sequence spans 334 residues: Replication factor C subunit 4 (334 aa).

Residue 55 to 62 (GPPGTGKT) participates in ATP binding.

This sequence belongs to the activator 1 small subunits family. In terms of assembly, heteropentamer of various rfc subunits that forms a complex (RFC) with PCNA in the presence of ATP.

Its subcellular location is the nucleus. In terms of biological role, the elongation of primed DNA templates by DNA polymerase delta and epsilon requires the action of the accessory proteins PCNA and activator 1. This subunit may be involved in the elongation of the multiprimed DNA template. The polypeptide is Replication factor C subunit 4 (rfc-4) (Caenorhabditis elegans).